A 525-amino-acid polypeptide reads, in one-letter code: Membrane-bound lytic murein transglycosylase F (525 aa).

The N-terminal stretch at 1–24 (MQIRHFNRLKRSVLLFASVLLLSA) is a signal peptide. The non-LT domain stretch occupies residues 25–284 (CQIESQPKSE…SLEEKYIGHI (260 aa)). The segment at 286–525 (AFDYVDTRAF…VDEDLDQEEE (240 aa)) is LT domain. Glu-329 is a catalytic residue. Residues 506 to 525 (VSGASDITNEVDEDLDQEEE) form a disordered region. Acidic residues predominate over residues 514-525 (NEVDEDLDQEEE).

In the N-terminal section; belongs to the bacterial solute-binding protein 3 family. This sequence in the C-terminal section; belongs to the transglycosylase Slt family.

The protein localises to the cell outer membrane. The enzyme catalyses Exolytic cleavage of the (1-&gt;4)-beta-glycosidic linkage between N-acetylmuramic acid (MurNAc) and N-acetylglucosamine (GlcNAc) residues in peptidoglycan, from either the reducing or the non-reducing ends of the peptidoglycan chains, with concomitant formation of a 1,6-anhydrobond in the MurNAc residue.. Murein-degrading enzyme that degrades murein glycan strands and insoluble, high-molecular weight murein sacculi, with the concomitant formation of a 1,6-anhydromuramoyl product. Lytic transglycosylases (LTs) play an integral role in the metabolism of the peptidoglycan (PG) sacculus. Their lytic action creates space within the PG sacculus to allow for its expansion as well as for the insertion of various structures such as secretion systems and flagella. This is Membrane-bound lytic murein transglycosylase F from Vibrio parahaemolyticus serotype O3:K6 (strain RIMD 2210633).